Here is a 1444-residue protein sequence, read N- to C-terminus: Protein shortage in chiasmata 1 ortholog (1444 aa).

The span at 1106-1117 (SITKSPQISSPQ) shows a compositional bias: low complexity. The interval 1106 to 1129 (SITKSPQISSPQENRNQISTLSSQ) is disordered.

Belongs to the XPF family. Highly divergent. Interacts with TEX11. Interacts with SPO16.

The protein localises to the chromosome. Functionally, ATPase required during meiosis for the formation of crossover recombination intermediates. Binds DNA: preferentially binds to single-stranded DNA and DNA branched structures. Does not show nuclease activity in vitro, but shows ATPase activity, which is stimulated by the presence of single-stranded DNA. Plays a key role in homologous recombination and crossing-over in meiotic prophase I in male and female germ cells. Required for proper synaptonemal complex assembly and homologous chromosome pairing. Requiref for recruitment TEX11 and MSH4 to recombination intermediates. This Homo sapiens (Human) protein is Protein shortage in chiasmata 1 ortholog.